The following is a 129-amino-acid chain: uncharacterized protein (129 aa).

A helical transmembrane segment spans residues Y8 to I24.

Its subcellular location is the membrane. This is an uncharacterized protein from Rickettsia prowazekii (strain Madrid E).